The sequence spans 185 residues: Homeobox expressed in ES cells 1 (185 aa).

Positions 32–69 (KKDCTTSVRPHRPWTDTCGDSEKGGNPPLHAPDLPSET) are disordered. Residues 108 to 167 (GRRPRTAFTQNQVEVLENVFRVNCYPGIDIREDLAQKLNLEEDRIQIWFQNRRAKMKRSR) constitute a DNA-binding region (homeobox).

This sequence belongs to the ANF homeobox family. As to quaternary structure, can form heterodimers with PROP1 in binding to DNA Interacts with TLE1. In terms of tissue distribution, high levels found in the embryonic liver, lower level expression seen in the viscera, amnion and yolk sac.

It is found in the nucleus. In terms of biological role, required for the normal development of the forebrain, eyes and other anterior structures such as the olfactory placodes and pituitary gland. Possible transcriptional repressor. Binds to the palindromic PIII sequence, 5'-AGCTTGAGTCTAATTGAATTAACTGTAC-3'. HESX1 and PROP1 bind as heterodimers on this palindromic site, and, in vitro, HESX1 can antagonize PROP1 activation. This chain is Homeobox expressed in ES cells 1 (Hesx1), found in Mus musculus (Mouse).